We begin with the raw amino-acid sequence, 140 residues long: uncharacterized protein (140 aa).

The protein localises to the mitochondrion. This is an uncharacterized protein from Homo sapiens (Human).